The chain runs to 2809 residues: Fibrillin-3 (2809 aa).

The signal sequence occupies residues 1–31 (MTLEGLYLARGPLARLLLAWSALLCMAGGQG). A propeptide spanning residues 32–48 (RWDGALEAAGPGRVRRR) is cleaved from the precursor. An EGF-like 1 domain is found at 147-179 (GQPICDRGCHNGGRCIGPNRCACVYGFMGPQCE). 3 disulfide bridges follow: cysteine 151–cysteine 161, cysteine 155–cysteine 167, and cysteine 169–cysteine 178. Positions 185-237 (GPCFGQVGPEGCQHQLTGLVCTKALCCATVGRAWGLPCELCPAQPHPCRRGFI) constitute a TB 1 domain. Positions 247-288 (DVDECQAVPGLCQGGSCVNMVGSFHCRCPVGHRLSDSSAACE) constitute an EGF-like 2; calcium-binding domain. 3 disulfides stabilise this stretch: cysteine 251–cysteine 263, cysteine 258–cysteine 272, and cysteine 274–cysteine 287. Residues 293 to 346 (GACFSVLFGGRCAGDLAGHYTRRQCCCDRGRCWAAGPVPELCPPRGSNEFQQLC) form the TB 2 domain. Asparagine 406 carries N-linked (GlcNAc...) asparagine glycosylation. One can recognise an EGF-like 3 domain in the interval 408–448 (TIDICRHFTNLCLNGRCLPTPSSYRCECNVGYTQDVRGECI). Cystine bridges form between cysteine 412–cysteine 424, cysteine 419–cysteine 433, cysteine 435–cysteine 447, cysteine 453–cysteine 463, cysteine 458–cysteine 472, cysteine 474–cysteine 487, cysteine 493–cysteine 505, cysteine 500–cysteine 514, cysteine 516–cysteine 529, cysteine 535–cysteine 546, cysteine 541–cysteine 555, cysteine 557–cysteine 570, cysteine 576–cysteine 587, cysteine 582–cysteine 596, and cysteine 598–cysteine 611. One can recognise an EGF-like 4; calcium-binding domain in the interval 449 to 488 (DVDECTSSPCHHGDCVNIPGTYHCRCYPGFQATPTRQACV). Residues 489–530 (DVDECIVSGGLCHLGRCVNTEGSFQCVCNAGFELSPDGKNCV) form the EGF-like 5; calcium-binding domain. One can recognise an EGF-like 6; calcium-binding domain in the interval 531 to 571 (DHNECATSTMCVNGVCLNEDGSFSCLCKPGFLLAPGGHYCM). Residues 572 to 612 (DIDECQTPGICVNGHCTNTEGSFRCQCLGGLAVGTDGRVCV) enclose the EGF-like 7; calcium-binding domain. Residues 618 to 670 (STCYGAIEKGSCARPFPGTVTKSECCCANPDHGFGEPCQLCPAKDSAEFQALC) form the TB 3 domain. One can recognise an EGF-like 8; calcium-binding domain in the interval 682-723 (DINECALDPEVCANGVCENLRGSYRCVCNLGYEAGASGKDCT). Cystine bridges form between cysteine 686–cysteine 698, cysteine 693–cysteine 707, cysteine 709–cysteine 722, cysteine 728–cysteine 740, cysteine 735–cysteine 749, cysteine 751–cysteine 764, cysteine 770–cysteine 780, cysteine 775–cysteine 789, and cysteine 791–cysteine 804. Residues 724–765 (DVDECALNSLLCDNGWCQNSPGSYSCSCPPGFHFWQDTEICK) form the EGF-like 9; calcium-binding domain. In terms of domain architecture, EGF-like 10; calcium-binding spans 766-805 (DVDECLSSPCVSGVCRNLAGSYTCKCGPGSRLDPSGTFCL). In terms of domain architecture, TB 4 spans 810 to 861 (GTCWLKIQESRCEVNLQGASLRSECCATLGAAWGSPCERCEIDPACARGFAR). In terms of domain architecture, EGF-like 11; calcium-binding spans 869–910 (DVNECESFPGVCPNGRCVNTAGSFRCECPEGLMLDASGRLCV). Intrachain disulfides connect cysteine 873/cysteine 885, cysteine 880/cysteine 894, and cysteine 896/cysteine 909. The TB 5 domain occupies 915–966 (EPCFLRWDEDECGVTLPGKYRMDVCCCSIGAVWGVECEACPDPESLEFASLC). In terms of domain architecture, EGF-like 12; calcium-binding spans 986 to 1027 (DVNECKVFPGLCTHGTCRNTVGSFHCACAGGFALDAQERNCT). 36 cysteine pairs are disulfide-bonded: cysteine 990–cysteine 1002, cysteine 997–cysteine 1011, cysteine 1013–cysteine 1026, cysteine 1032–cysteine 1044, cysteine 1039–cysteine 1053, cysteine 1055–cysteine 1069, cysteine 1075–cysteine 1087, cysteine 1082–cysteine 1096, cysteine 1098–cysteine 1111, cysteine 1117–cysteine 1129, cysteine 1124–cysteine 1138, cysteine 1140–cysteine 1153, cysteine 1159–cysteine 1170, cysteine 1166–cysteine 1179, cysteine 1181–cysteine 1194, cysteine 1200–cysteine 1212, cysteine 1207–cysteine 1221, cysteine 1223–cysteine 1236, cysteine 1242–cysteine 1254, cysteine 1249–cysteine 1263, cysteine 1265–cysteine 1278, cysteine 1284–cysteine 1297, cysteine 1291–cysteine 1306, cysteine 1308–cysteine 1319, cysteine 1325–cysteine 1338, cysteine 1332–cysteine 1347, cysteine 1349–cysteine 1360, cysteine 1366–cysteine 1378, cysteine 1373–cysteine 1387, cysteine 1389–cysteine 1402, cysteine 1408–cysteine 1419, cysteine 1414–cysteine 1428, cysteine 1430–cysteine 1443, cysteine 1449–cysteine 1460, cysteine 1455–cysteine 1469, and cysteine 1471–cysteine 1484. N-linked (GlcNAc...) asparagine glycosylation occurs at asparagine 1025. The 43-residue stretch at 1028 to 1070 (DIDECRISPDLCGQGTCVNTPGSFECECFPGYESGFMLMKNCM) folds into the EGF-like 13; calcium-binding domain. The region spanning 1071-1112 (DVDECARDPLLCRGGTCTNTDGSYKCQCPPGHELTAKGTACE) is the EGF-like 14; calcium-binding domain. In terms of domain architecture, EGF-like 15; calcium-binding spans 1113-1154 (DIDECSLSDGLCPHGQCVNVIGAFQCSCHAGFQSTPDRQGCV). Positions 1155-1195 (DINECRVQNGGCDVHCINTEGSYRCSCGQGYSLMPDGRACA) constitute an EGF-like 16; calcium-binding domain. Positions 1196-1237 (DVDECEENPRVCDQGHCTNMPGGHRCLCYDGFMATPDMRTCV) constitute an EGF-like 17 domain. Positions 1238-1279 (DVDECDLNPHICLHGDCENTKGSFVCHCQLGYMVRKGATGCS) constitute an EGF-like 18; calcium-binding domain. The region spanning 1280 to 1320 (DVDECEVGGHNCDSHASCLNIPGSFSCRCLPGWVGDGFECH) is the EGF-like 19; calcium-binding domain. In terms of domain architecture, EGF-like 20; calcium-binding spans 1321 to 1361 (DLDECVSQEHRCSPRGDCLNVPGSYRCTCRQGFAGDGFFCE). The region spanning 1362 to 1403 (DRDECAENVDLCDNGQCLNAPGGYRCECEMGFDPTEDHRACQ) is the EGF-like 21; calcium-binding domain. An EGF-like 22; calcium-binding domain is found at 1404–1444 (DVDECAQGNLCAFGSCENLPGMFRCICNGGYELDRGGGNCT). An N-linked (GlcNAc...) asparagine glycan is attached at asparagine 1442. Residues 1445–1485 (DINECADPVNCINGVCINTPGSYLCSCPQDFELNPSGVGCV) enclose the EGF-like 23; calcium-binding domain. The 57-residue stretch at 1490-1546 (GNCFLETHDRGDSGISCSAEIGVGVTRASCCCSLGRAWGNPCELCPMANTTEYRTLC) folds into the TB 6 domain. An N-linked (GlcNAc...) asparagine glycan is attached at asparagine 1538. Residues 1563–1604 (DIDECQELPGLCQGGDCVNTFGSFQCECPPGYHLSEHTRICE) form the EGF-like 24; calcium-binding domain. 6 disulfide bridges follow: cysteine 1567–cysteine 1579, cysteine 1574–cysteine 1588, cysteine 1590–cysteine 1603, cysteine 1609–cysteine 1621, cysteine 1616–cysteine 1630, and cysteine 1632–cysteine 1645. One can recognise an EGF-like 25; calcium-binding domain in the interval 1605–1646 (DIDECSTHSGICGPGTCYNTLGNYTCVCPAEYLQVNGGNNCM). Asparagine 1627 carries N-linked (GlcNAc...) asparagine glycosylation. The TB 7 domain occupies 1651-1703 (SVCFRHYNGTCQNELAFNVTRKMCCCSYNIGQAWNRPCEACPTPISPDYQILC). Asparagine 1658 and asparagine 1668 each carry an N-linked (GlcNAc...) asparagine glycan. Residues 1721-1762 (DIDECGEIPAICANGICINQIGSFRCECPAGFNYNSILLACE) form the EGF-like 26; calcium-binding domain. 21 disulfides stabilise this stretch: cysteine 1725–cysteine 1737, cysteine 1732–cysteine 1746, cysteine 1748–cysteine 1761, cysteine 1767–cysteine 1780, cysteine 1774–cysteine 1789, cysteine 1791–cysteine 1803, cysteine 1809–cysteine 1821, cysteine 1816–cysteine 1830, cysteine 1832–cysteine 1845, cysteine 1851–cysteine 1861, cysteine 1856–cysteine 1870, cysteine 1872–cysteine 1884, cysteine 1890–cysteine 1903, cysteine 1898–cysteine 1912, cysteine 1914–cysteine 1927, cysteine 1933–cysteine 1945, cysteine 1940–cysteine 1954, cysteine 1956–cysteine 1967, cysteine 1973–cysteine 1985, cysteine 1980–cysteine 1994, and cysteine 1996–cysteine 2009. One can recognise an EGF-like 27; calcium-binding domain in the interval 1763–1804 (DVDECGSRESPCQQNADCINIPGSYRCKCTRGYKLSPGGACV). The 42-residue stretch at 1805–1846 (GRNECREIPNVCSHGDCMDTEGSYMCLCHRGFQASADQTLCM) folds into the EGF-like 28 domain. One can recognise an EGF-like 29; calcium-binding domain in the interval 1847-1885 (DIDECDRQPCGNGTCKNIIGSYNCLCFPGFVVTHNGDCV). N-linked (GlcNAc...) asparagine glycosylation occurs at asparagine 1858. Residues 1886–1928 (DFDECTTLVGQVCRFGHCLNTAGSFHCLCQDGFELTADGKNCV) enclose the EGF-like 30; calcium-binding domain. The EGF-like 31; calcium-binding domain maps to 1929–1968 (DTNECLSLAGTCLPGTCQNLEGSFRCICPPGFQVQSDHCI). One can recognise an EGF-like 32; calcium-binding domain in the interval 1969-2010 (DIDECSEEPNLCLFGTCTNSPGSFQCLCPPGFVLSDNGHRCF). In terms of domain architecture, TB 8 spans 2015 to 2068 (SFCFTRFEAGKCSVPKAFNTTKTRCCCSKRPGEGWGDPCELCPQEGSAAFQELC). N-linked (GlcNAc...) asparagine glycosylation occurs at asparagine 2033. The EGF-like 33; calcium-binding domain occupies 2084–2125 (DVNECAENPGVCTNGVCVNTDGSFRCECPFGYSLDFTGINCV). 15 cysteine pairs are disulfide-bonded: cysteine 2088–cysteine 2100, cysteine 2095–cysteine 2109, cysteine 2111–cysteine 2124, cysteine 2130–cysteine 2141, cysteine 2136–cysteine 2150, cysteine 2152–cysteine 2164, cysteine 2170–cysteine 2181, cysteine 2177–cysteine 2190, cysteine 2192–cysteine 2205, cysteine 2211–cysteine 2225, cysteine 2218–cysteine 2234, cysteine 2236–cysteine 2250, cysteine 2256–cysteine 2268, cysteine 2263–cysteine 2277, and cysteine 2279–cysteine 2292. Residues 2126-2165 (DTDECSVGHPCGQGTCTNVIGGFECACADGFEPGLMMTCE) enclose the EGF-like 34; calcium-binding domain. The EGF-like 35; calcium-binding domain maps to 2166-2206 (DIDECSLNPLLCAFRCHNTEGSYLCTCPAGYTLREDGAMCR). The region spanning 2207 to 2251 (DVDECADGQQDCHARGMECKNLIGTFACVCPPGMRPLPGSGEGCT) is the EGF-like 36; calcium-binding domain. The region spanning 2252–2293 (DDNECHAQPDLCVNGRCVNTAGSFRCDCDEGFQPSPTLTECH) is the EGF-like 37; calcium-binding domain. Residues 2298 to 2351 (GPCFAEVLQTMCRSLSSSSEAVTRAECCCGGGRGWGPRCELCPLPGTSAYRKLC) form the TB 9 domain. The EGF-like 38; calcium-binding domain occupies 2363 to 2404 (DVDECRMLAHLCAHGECINSLGSFRCHCQAGYTPDATATTCL). 21 disulfides stabilise this stretch: cysteine 2367/cysteine 2379, cysteine 2374/cysteine 2388, cysteine 2390/cysteine 2403, cysteine 2409/cysteine 2420, cysteine 2416/cysteine 2429, cysteine 2431/cysteine 2444, cysteine 2450/cysteine 2461, cysteine 2457/cysteine 2470, cysteine 2472/cysteine 2483, cysteine 2489/cysteine 2502, cysteine 2496/cysteine 2511, cysteine 2513/cysteine 2526, cysteine 2532/cysteine 2542, cysteine 2538/cysteine 2551, cysteine 2553/cysteine 2566, cysteine 2572/cysteine 2584, cysteine 2579/cysteine 2593, cysteine 2595/cysteine 2608, cysteine 2614/cysteine 2625, cysteine 2621/cysteine 2634, and cysteine 2636/cysteine 2648. Positions 2405–2445 (DMDECSQVPKPCTFLCKNTKGSFLCSCPRGYLLEEDGRTCK) constitute an EGF-like 39; calcium-binding domain. The 39-residue stretch at 2446-2484 (DLDECTSRQHNCQFLCVNTVGAFTCRCPPGFTQHHQACF) folds into the EGF-like 40; calcium-binding domain. The EGF-like 41; calcium-binding domain occupies 2485-2527 (DNDECSAQPGPCGAHGHCHNTPGSFRCECHQGFTLVSSGHGCE). One can recognise an EGF-like 42; calcium-binding domain in the interval 2528–2567 (DVNECDGPHRCQHGCQNQLGGYRCSCPQGFTQHSQWAQCV). The region spanning 2568-2609 (DENECALSPPTCGSASCRNTLGGFRCVCPSGFDFDQALGGCQ) is the EGF-like 43; calcium-binding domain. The EGF-like 44; calcium-binding domain occupies 2610 to 2649 (EVDECAGRRGPCSYSCANTPGGFLCGCPQGYFRAGQGHCV). The N-linked (GlcNAc...) asparagine glycan is linked to asparagine 2713.

This sequence belongs to the fibrillin family. In terms of processing, probably forms intermolecular disulfide bonds either with other FBN3 molecules or with other components of the microfibrils. Predominantly expressed in connective tissues such as skeletal muscle, tendon, skin, perichondrium and periosteum. Highly expressed in fetal lung, brain, kidney. Expressed at low level in prostate, testis, mammary gland, uterus, ovary, placenta, bladder, adrenal gland, thyroid, fetal thymus, fetal liver, liver, fetal heart and heart.

The protein resides in the secreted. It is found in the extracellular space. Its subcellular location is the extracellular matrix. Functionally, fibrillins are structural components of 10-12 nm extracellular calcium-binding microfibrils, which occur either in association with elastin or in elastin-free bundles. Fibrillin-containing microfibrils provide long-term force bearing structural support. This is Fibrillin-3 (FBN3) from Homo sapiens (Human).